The primary structure comprises 586 residues: Arginine--tRNA ligase (586 aa).

Positions Ala-131–His-141 match the 'HIGH' region motif.

Belongs to the class-I aminoacyl-tRNA synthetase family. In terms of assembly, monomer.

The protein localises to the cytoplasm. It catalyses the reaction tRNA(Arg) + L-arginine + ATP = L-arginyl-tRNA(Arg) + AMP + diphosphate. The chain is Arginine--tRNA ligase from Nitrosomonas europaea (strain ATCC 19718 / CIP 103999 / KCTC 2705 / NBRC 14298).